A 390-amino-acid polypeptide reads, in one-letter code: Transforming growth factor beta-1 proprotein (390 aa).

The signal sequence occupies residues Met1–Gly29. Residues Leu30 to Pro74 form a straightjacket domain region. The arm domain stretch occupies residues Glu75–Leu271. N-linked (GlcNAc...) asparagine glycans are attached at residues Asn82, Asn136, and Asn176. The tract at residues Asp226–Gly252 is bowtie tail. A Cell attachment site motif is present at residues Arg244–Asp246. Cystine bridges form between Cys285–Cys294, Cys293–Cys356, Cys322–Cys387, and Cys326–Cys389.

It belongs to the TGF-beta family. Homodimer; disulfide-linked. Interacts with the serine proteases, HTRA1 and HTRA3: the interaction with either inhibits TGFB1-mediated signaling and the HTRA protease activity is required for this inhibition. May interact with THSD4; this interaction may lead to sequestration by FBN1 microfibril assembly and attenuation of TGFB signaling. Interacts with CD109, DPT and ASPN. Interacts with EFEMP2. Interacts with TSKU; the interaction contributes to regulation of the hair cycle. Interacts with TGFBR3. As to quaternary structure, homodimer; disulfide-linked. Interacts with transforming growth factor beta-1 (TGF-beta-1) chain; interaction is non-covalent and maintains TGF-beta-1 in a latent state; each latency-associated peptide (LAP) monomer interacts with TGF-beta-1 in the other monomer. Interacts with LTBP1; leading to regulation of TGF-beta-1 activation. Interacts with LRRC32/GARP; leading to regulation of TGF-beta-1 activation on the surface of activated regulatory T-cells (Tregs). Interacts with LRRC33/NRROS; leading to regulation of TGF-beta-1 activation in macrophages and microglia. Interacts (via cell attachment site) with integrins ITGAV and ITGB6 (ITGAV:ITGB6), leading to release of the active TGF-beta-1. Interacts with NREP; the interaction results in a decrease in TGFB1 autoinduction. Interacts with HSP90AB1; inhibits latent TGFB1 activation. In terms of assembly, homodimer; disulfide-linked. Interacts with TGF-beta receptors (TGFBR1 and TGFBR2), leading to signal transduction. Transforming growth factor beta-1 proprotein: The precursor proprotein is cleaved in the Golgi apparatus by FURIN to form Transforming growth factor beta-1 (TGF-beta-1) and Latency-associated peptide (LAP) chains, which remain non-covalently linked, rendering TGF-beta-1 inactive. In terms of processing, N-glycosylated. Deglycosylation leads to activation of Transforming growth factor beta-1 (TGF-beta-1); mechanisms triggering deglycosylation-driven activation of TGF-beta-1 are however unclear.

It is found in the secreted. Its subcellular location is the extracellular space. It localises to the extracellular matrix. Transforming growth factor beta-1 proprotein: Precursor of the Latency-associated peptide (LAP) and Transforming growth factor beta-1 (TGF-beta-1) chains, which constitute the regulatory and active subunit of TGF-beta-1, respectively. Functionally, required to maintain the Transforming growth factor beta-1 (TGF-beta-1) chain in a latent state during storage in extracellular matrix. Associates non-covalently with TGF-beta-1 and regulates its activation via interaction with 'milieu molecules', such as LTBP1, LRRC32/GARP and LRRC33/NRROS, that control activation of TGF-beta-1. Interaction with LRRC33/NRROS regulates activation of TGF-beta-1 in macrophages and microglia. Interaction with LRRC32/GARP controls activation of TGF-beta-1 on the surface of activated regulatory T-cells (Tregs). Interaction with integrins (ITGAV:ITGB6 or ITGAV:ITGB8) results in distortion of the Latency-associated peptide chain and subsequent release of the active TGF-beta-1. Its function is as follows. Multifunctional protein that regulates the growth and differentiation of various cell types and is involved in various processes, such as normal development, immune function, microglia function and responses to neurodegeneration. Activation into mature form follows different steps: following cleavage of the proprotein in the Golgi apparatus, Latency-associated peptide (LAP) and Transforming growth factor beta-1 (TGF-beta-1) chains remain non-covalently linked rendering TGF-beta-1 inactive during storage in extracellular matrix. At the same time, LAP chain interacts with 'milieu molecules', such as LTBP1, LRRC32/GARP and LRRC33/NRROS that control activation of TGF-beta-1 and maintain it in a latent state during storage in extracellular milieus. TGF-beta-1 is released from LAP by integrins (ITGAV:ITGB6 or ITGAV:ITGB8): integrin-binding to LAP stabilizes an alternative conformation of the LAP bowtie tail and results in distortion of the LAP chain and subsequent release of the active TGF-beta-1. Once activated following release of LAP, TGF-beta-1 acts by binding to TGF-beta receptors (TGFBR1 and TGFBR2), which transduce signal. While expressed by many cells types, TGF-beta-1 only has a very localized range of action within cell environment thanks to fine regulation of its activation by Latency-associated peptide chain (LAP) and 'milieu molecules'. Plays an important role in bone remodeling: acts as a potent stimulator of osteoblastic bone formation, causing chemotaxis, proliferation and differentiation in committed osteoblasts. Can promote either T-helper 17 cells (Th17) or regulatory T-cells (Treg) lineage differentiation in a concentration-dependent manner. At high concentrations, leads to FOXP3-mediated suppression of RORC and down-regulation of IL-17 expression, favoring Treg cell development. At low concentrations in concert with IL-6 and IL-21, leads to expression of the IL-17 and IL-23 receptors, favoring differentiation to Th17 cells. Stimulates sustained production of collagen through the activation of CREB3L1 by regulated intramembrane proteolysis (RIP). Mediates SMAD2/3 activation by inducing its phosphorylation and subsequent translocation to the nucleus. Positively regulates odontoblastic differentiation in dental papilla cells, via promotion of IPO7-mediated translocation of phosphorylated SMAD2 to the nucleus and subsequent transcription of target genes. Can induce epithelial-to-mesenchymal transition (EMT) and cell migration in various cell types. The chain is Transforming growth factor beta-1 proprotein (TGFB1) from Mustela putorius furo (European domestic ferret).